Consider the following 449-residue polypeptide: Glycine receptor subunit alpha-2 (449 aa).

The first 27 residues, Met1–Gly27, serve as a signal peptide directing secretion. Residues Lys28–Tyr255 lie on the Extracellular side of the membrane. The N-linked (GlcNAc...) asparagine glycan is linked to Asn70. Glycine-binding residues include Arg97 and Ser161. A strychnine-binding site is contributed by Arg97. Cysteines 170 and 184 form a disulfide. Zn(2+)-binding residues include Glu224 and Asp226. Cys230 and Cys241 are disulfide-bonded. A glycine-binding site is contributed by Thr236. Position 247 (His247) interacts with Zn(2+). Residues Leu256 to Ile276 traverse the membrane as a helical segment. The Cytoplasmic portion of the chain corresponds to Asn277–Pro282. The helical transmembrane segment at Ala283–Ser302 threads the bilayer. Topologically, residues Arg303–Lys313 are extracellular. Residues Ala314–Ala334 form a helical membrane-spanning segment. At Gly335–Arg420 the chain is on the cytoplasmic side. A helical membrane pass occupies residues Ala421 to Ile441. The Extracellular portion of the chain corresponds to Arg442–Asp449.

Belongs to the ligand-gated ion channel (TC 1.A.9) family.

Its subcellular location is the postsynaptic cell membrane. The protein resides in the synapse. The protein localises to the cell membrane. It is found in the cell projection. It carries out the reaction chloride(in) = chloride(out). Channel opening is triggered by extracellular glycine. Channel opening is also triggered by taurine and beta-alanine. Inhibited by strychnine. Functionally, subunit of heteromeric glycine-gated chloride channels. Plays a role in synaptic plasticity. Contributes to the generation of inhibitory postsynaptic currents, and is involved in the down-regulation of neuronal excitability. The protein is Glycine receptor subunit alpha-2 (glra2) of Danio rerio (Zebrafish).